We begin with the raw amino-acid sequence, 333 residues long: tRNA N6-adenosine threonylcarbamoyltransferase (333 aa).

Fe cation is bound by residues histidine 111 and histidine 115. Residues 134 to 138 (LASGG), aspartate 167, glycine 180, and asparagine 273 contribute to the substrate site. Aspartate 301 is a binding site for Fe cation.

This sequence belongs to the KAE1 / TsaD family. Requires Fe(2+) as cofactor.

It localises to the cytoplasm. It catalyses the reaction L-threonylcarbamoyladenylate + adenosine(37) in tRNA = N(6)-L-threonylcarbamoyladenosine(37) in tRNA + AMP + H(+). Required for the formation of a threonylcarbamoyl group on adenosine at position 37 (t(6)A37) in tRNAs that read codons beginning with adenine. Is involved in the transfer of the threonylcarbamoyl moiety of threonylcarbamoyl-AMP (TC-AMP) to the N6 group of A37, together with TsaE and TsaB. TsaD likely plays a direct catalytic role in this reaction. The polypeptide is tRNA N6-adenosine threonylcarbamoyltransferase (Desulforapulum autotrophicum (strain ATCC 43914 / DSM 3382 / VKM B-1955 / HRM2) (Desulfobacterium autotrophicum)).